The primary structure comprises 2641 residues: Inverse autotransporter adhesin YeeJ (2641 aa).

An N-terminal signal peptide occupies residues 1-25 (MGIKLRRLTAGICLITQLVFPMAAA). In terms of domain architecture, LysM spans 50 to 98 (VPYTLGALESAQSVAERFGISVAELRKLNQFRTFARGFDNVRQGDELDV). The inverse autotransporter stretch occupies residues 125 to 400 (TSQQIGSLLA…SRFDLVDRNN (276 aa)). Residues 513 to 605 (QKDSSVSLSS…GVDAAKAPAV (93 aa)) are invasin 3 domain. Big-1 domains lie at 617 to 711 (HSSI…AGFI), 721 to 815 (IATL…VSFV), 822 to 913 (QVDL…VIFI), 920 to 1017 (ALTL…MTFV), 1024 to 1116 (VVVL…VNIA), 1123 to 1220 (QVTL…VTFV), 1227 to 1319 (VVVL…VNIA), 1326 to 1423 (QVTL…VTFV), 1430 to 1523 (LVVL…VHFI), 1531 to 1633 (IIEL…SINV), 1641 to 1734 (HLTL…VTYV), 1741 to 1837 (EISL…VNFI), 1844 to 1941 (QVNL…VTLI), 1948 to 2032 (KLAS…PTEV), 2048 to 2141 (ITSL…VIDQ), 2142 to 2235 (KLTL…IVKV), and 2244 to 2336 (VASF…ITLV). The tract at residues 2538–2641 (KSWWVNAGDA…FAYATCYKNL (104 aa)) is C-type lectin domain.

This sequence belongs to the intimin/invasin family.

It is found in the cell outer membrane. Functionally, a probable inverse autotransporter, it may be involved in biofilm formation and cell adhesion. May bind peptidoglycan via its LysM domain. This chain is Inverse autotransporter adhesin YeeJ (yeeJ), found in Escherichia coli O157:H7.